Reading from the N-terminus, the 674-residue chain is Polyunsaturated fatty acid 5-lipoxygenase (674 aa).

A PLAT domain is found at 2 to 118 (PSYTVTVATG…EVVLRDGRAK (117 aa)). Ca(2+)-binding residues include G17, T18, D19, N44, D45, E47, D79, and D80. The region spanning 119 to 674 (LARDDQIHIL…PDRIPNSVAI (556 aa)) is the Lipoxygenase domain. Position 272 is a phosphoserine; by MAPKAPK2 (S272). H368 and H373 together coordinate Fe cation. S524 is modified (phosphoserine; by PKA). The Fe cation site is built by H551, N555, and I674.

This sequence belongs to the lipoxygenase family. Homodimer. Interacts with ALOX5AP and LTC4S. Interacts with COTL1, the interaction is required for stability and efficient catalytic activity. Interacts with PIK3R1; this interaction bridges ALOX5 with CD40 after CD40 ligation in B cells and leads to the production of reactive oxygen species (ROS). Interacts (via PLAT domain) with DICER1 (via Dicer dsRNA-binding fold domain); this interaction enhances arachidonate 5-lipoxygenase activity and modifies the miRNA precursor processing activity of DICER1. It depends on Fe cation as a cofactor. Serine phosphorylation by MAPKAPK2 is stimulated by arachidonic acid. Phosphorylation on Ser-524 by PKA has an inhibitory effect. Phosphorylation on Ser-272 prevents export from the nucleus. Phosphorylation at Ser-524 is stimulated by 8-bromo-3',5'-cyclic AMP or prostaglandin E2.

Its subcellular location is the cytoplasm. The protein localises to the nucleus matrix. It is found in the nucleus membrane. The protein resides in the perinuclear region. It localises to the cytosol. Its subcellular location is the nucleus envelope. The protein localises to the nucleus intermembrane space. It carries out the reaction (5Z,8Z,11Z,14Z)-eicosatetraenoate + O2 = leukotriene A4 + H2O. The catalysed reaction is 18-HEPE + O2 = (5S)-hydroperoxy-18-hydroxy-(7E,9E,11Z,14Z,16E)-eicosapentaenoate. It catalyses the reaction (18R)-hydroxy-(5Z,8Z,11Z,14Z,16E)-eicosapentaenoate + O2 = (5S)-hydroperoxy-(18R)-hydroxy-(6E,8Z,11Z,14Z,16E)-eicosapentaenoate. The enzyme catalyses (18S)-hydroxy-(5Z,8Z,11Z,14Z,16E)-eicosapentaenoate + O2 = (5S)-hydroperoxy-(18S)-hydroxy-(6E,8Z,11Z,14Z,16E)-eicosapentaenoate. It carries out the reaction (5S)-hydroperoxy-(18S)-hydroxy-(6E,8Z,11Z,14Z,16E)-eicosapentaenoate = (5S,6S)-epoxy-(18S)-hydroxy-(7E,9E,11Z,14Z,16E)-eicosapentaenoate + H2O. The catalysed reaction is (5S)-hydroperoxy-(18R)-hydroxy-(6E,8Z,11Z,14Z,16E)-eicosapentaenoate = (5S,6S)-epoxy-(18R)-hydroxy-(7E,9E,11Z,14Z,16E)-eicosapentaenoate + H2O. It catalyses the reaction (5S)-hydroperoxy-18-hydroxy-(7E,9E,11Z,14Z,16E)-eicosapentaenoate = (5S,6S)-epoxy-18-hydroxy-(7E,9E,11Z,14Z,16E)-eicosapentaenoate + H2O. The enzyme catalyses (5Z,8Z,11Z,14Z)-eicosatetraenoate + O2 = (5S)-hydroperoxy-(6E,8Z,11Z,14Z)-eicosatetraenoate. It carries out the reaction (15S)-hydroxy-(5Z,8Z,11Z,13E)-eicosatetraenoate + O2 = (5S)-hydroperoxy-(15S)-hydroxy-(6E,8Z,11Z,13E)-eicosatetraenoate. The catalysed reaction is (5S)-hydroperoxy-(6E,8Z,11Z,14Z)-eicosatetraenoate = leukotriene A4 + H2O. It catalyses the reaction (5Z,8Z,11Z,14Z)-eicosatetraenoate + O2 = (8S)-hydroperoxy-(5Z,9E,11Z,14Z)-eicosatetraenoate. The enzyme catalyses (5Z,8Z,11Z,14Z)-eicosatetraenoate + O2 = (12S)-hydroperoxy-(5Z,8Z,10E,14Z)-eicosatetraenoate. It carries out the reaction (5Z,8Z)-eicosadienoate + O2 = (5S)-hydroperoxy-(6E,8Z)-eicosadienoate. The catalysed reaction is (12S)-hydroxy-(5Z,8Z,10E,14Z)-eicosatetraenoate + O2 = (5S)-hydroperoxy-(12S)-hydroxy-(6E,8Z,10E,14Z)-eicosatetraenoate. It catalyses the reaction (5Z,8Z,11Z,14Z,17Z)-eicosapentaenoate + O2 = 5-hydroperoxy-(6E,8Z,11Z,14Z,17Z)-eicosapentaenoate. The enzyme catalyses (4Z,7Z,10Z,13Z,16Z,19Z)-docosahexaenoate + O2 = (14S)-hydroperoxy-(4Z,7Z,10Z,12E,16Z,19Z)-docosahexaenoate. It carries out the reaction (4Z,7Z,10Z,13Z,16Z,19Z)-docosahexaenoate + O2 = (7S)-hydroperoxy-(4Z,8E,10Z,13Z,16Z,19Z)-docosahexaenoate. The catalysed reaction is (4Z,7Z,10Z,13Z,16Z,19Z)-docosahexaenoate + O2 = (17S)-hydroperoxy-(4Z,7Z,10Z,13Z,15E,19Z)-docosahexaenoate. It functions in the pathway lipid metabolism; leukotriene A4 biosynthesis. Undergoes a sequential loss of the oxygenase and pseudoperoxidase activities which is dependent on the structural characteristics of the substrate for the reaction, on oxygen concentration and on exposure to phospholipids and calcium. 15-HETE and other 15-mono-hydroxyeicosanoids exhibit the highest inhibitory potencies in their capability of suppressing 5-lipoxygenation of arachidonic acid, whereas the other HETEs, (5S,15S)-dihydroxy-(6E,8Z,11Z,13E)-eicosatetraenoic acid (5,15-diHETE) as well as octadecanoids, are modest or poor inhibitors. The formation of (5S)-hydroperoxy-(15S)-hydroxy-(6E,8Z,11Z,13E)-eicosatetraenoate is strongly stimulated by either hydroperoxypolyenoic fatty acids or arachidonic acid. Arachidonate 5-lipoxygenase and leukotriene A4 synthase activities are allosterically increased by ATP. Its function is as follows. Catalyzes the oxygenation of arachidonate ((5Z,8Z,11Z,14Z)-eicosatetraenoate) to 5-hydroperoxyeicosatetraenoate (5-HPETE) followed by the dehydration to 5,6- epoxyeicosatetraenoate (Leukotriene A4/LTA4), the first two steps in the biosynthesis of leukotrienes, which are potent mediators of inflammation. Also catalyzes the oxygenation of arachidonate into 8-hydroperoxyicosatetraenoate (8-HPETE) and 12-hydroperoxyicosatetraenoate (12-HPETE). Displays lipoxin synthase activity being able to convert (15S)-HETE into a conjugate tetraene. Although arachidonate is the preferred substrate, this enzyme can also metabolize oxidized fatty acids derived from arachidonate such as (15S)-HETE, eicosapentaenoate (EPA) such as (18R)- and (18S)-HEPE or docosahexaenoate (DHA) which lead to the formation of specialized pro-resolving mediators (SPM) lipoxin and resolvins E and D respectively, therefore it participates in anti-inflammatory responses. Oxidation of DHA directly inhibits endothelial cell proliferation and sprouting angiogenesis via peroxisome proliferator-activated receptor gamma (PPARgamma). It does not catalyze the oxygenation of linoleic acid and does not convert (5S)-HETE to lipoxin isomers. In addition to inflammatory processes, it participates in dendritic cell migration, wound healing through an antioxidant mechanism based on heme oxygenase-1 (HO-1) regulation expression, monocyte adhesion to the endothelium via ITGAM expression on monocytes. Moreover, it helps establish an adaptive humoral immunity by regulating primary resting B cells and follicular helper T cells and participates in the CD40-induced production of reactive oxygen species (ROS) after CD40 ligation in B cells through interaction with PIK3R1 that bridges ALOX5 with CD40. May also play a role in glucose homeostasis, regulation of insulin secretion and palmitic acid-induced insulin resistance via AMPK. Can regulate bone mineralization and fat cell differentiation increases in induced pluripotent stem cells. This is Polyunsaturated fatty acid 5-lipoxygenase from Homo sapiens (Human).